Consider the following 239-residue polypeptide: ATP-dependent dethiobiotin synthetase BioD (239 aa).

ATP is bound at residue 15-20 (EIGKTF). Residue threonine 19 participates in Mg(2+) binding. Lysine 40 is an active-site residue. Residues aspartate 57, 118–121 (EGVG), and 178–179 (NH) contribute to the ATP site. Mg(2+)-binding residues include aspartate 57 and glutamate 118.

Belongs to the dethiobiotin synthetase family. As to quaternary structure, homodimer. Mg(2+) serves as cofactor.

It is found in the cytoplasm. It carries out the reaction (7R,8S)-7,8-diammoniononanoate + CO2 + ATP = (4R,5S)-dethiobiotin + ADP + phosphate + 3 H(+). Its pathway is cofactor biosynthesis; biotin biosynthesis; biotin from 7,8-diaminononanoate: step 1/2. Its function is as follows. Catalyzes a mechanistically unusual reaction, the ATP-dependent insertion of CO2 between the N7 and N8 nitrogen atoms of 7,8-diaminopelargonic acid (DAPA, also called 7,8-diammoniononanoate) to form a ureido ring. This chain is ATP-dependent dethiobiotin synthetase BioD, found in Burkholderia multivorans (strain ATCC 17616 / 249).